Here is a 171-residue protein sequence, read N- to C-terminus: Transcription antitermination protein NusB (171 aa).

This sequence belongs to the NusB family.

Involved in transcription antitermination. Required for transcription of ribosomal RNA (rRNA) genes. Binds specifically to the boxA antiterminator sequence of the ribosomal RNA (rrn) operons. The protein is Transcription antitermination protein NusB of Brucella abortus (strain S19).